The primary structure comprises 208 residues: Small ribosomal subunit protein uS9c (208 aa).

Residues 1–52 (MASITNLASSLSSLSFSSQVSQRPNTISFPRANSVFALPAKSARRASLSITA) constitute a chloroplast transit peptide.

The protein belongs to the universal ribosomal protein uS9 family.

The protein localises to the plastid. Its subcellular location is the chloroplast. Functionally, binds directly to 16S ribosomal RNA. The protein is Small ribosomal subunit protein uS9c (RPS9) of Arabidopsis thaliana (Mouse-ear cress).